The following is a 177-amino-acid chain: Inorganic pyrophosphatase (177 aa).

Lys-31, Arg-45, and Tyr-57 together coordinate substrate. 3 residues coordinate Mg(2+): Asp-67, Asp-72, and Asp-104. Tyr-142 lines the substrate pocket.

Belongs to the PPase family. In terms of assembly, homohexamer. Requires Mg(2+) as cofactor.

The protein resides in the cytoplasm. The enzyme catalyses diphosphate + H2O = 2 phosphate + H(+). Functionally, catalyzes the hydrolysis of inorganic pyrophosphate (PPi) forming two phosphate ions. The protein is Inorganic pyrophosphatase of Neisseria meningitidis serogroup A / serotype 4A (strain DSM 15465 / Z2491).